A 73-amino-acid chain; its full sequence is Disintegrin barbourin (73 aa).

The 73-residue stretch at 1–73 (EAGEECDCGS…ADCPRNGLYG (73 aa)) folds into the Disintegrin domain. Disulfide bonds link Cys6–Cys21, Cys8–Cys16, Cys15–Cys38, Cys29–Cys35, Cys34–Cys59, and Cys47–Cys66. A Cell attachment site; atypical (KGD) motif is present at residues 51–53 (KGD).

It belongs to the venom metalloproteinase (M12B) family. P-II subfamily. P-IIa sub-subfamily. In terms of assembly, monomer. Expressed by the venom gland.

It localises to the secreted. Functionally, inhibitor of ligand binding to the integrins alpha-IIb/beta-3 (ITGA2B/ITGB3). Competition with fibrinogen for the RGD recognition sites on the alpha-IIb/beta-3 integrin results in the inhibition of platelet aggregation induced by ADP, thrombin, platelet-activating factor and collagen. This chain is Disintegrin barbourin, found in Sistrurus miliarius barbouri (Dusky pigmy rattlesnake).